The following is a 451-amino-acid chain: MTKRKLRNNWIIVTTMITFVTIFLFCLIIIFFLKDTLHNSELDDAERSSSDINNLFHSKPVKDISALDLNASLGNFQEIIIYDEHNNKLFETSNDNTVRVEPGYEHRYFDRVIKKRYKGIEYLIIKEPITTQDFKGYSLLIHSLENYDNIVKSLYIIALAFGVIATIITATISYVFSTQITKPLVSLSNKMIEIRRDGFQNKLQLNTNYEEIDNLANTFNEMMSQIEESFNQQRQFVEDASHELRTPLQIIQGHLNLIQRWGKKDPAVLEESLNISIEEMNRIIKLVEELLELTKGDVNDISSEAQTVHINDEIRSRIHSLKQLHPDYQFDTDLTSKNLEIKMKPHQFEQLFLIFIDNAIKYDVKNKKIKVKTRLKNKQKIIEITDHGIGIPEEDQDFIFDRFYRVDKSRSRSQGGNGLGLSIAQKIIQLNGGSIKIKSEINKGTTFKIIF.

Transmembrane regions (helical) follow at residues 11–31 and 156–176; these read IIVT…IIIF and IIAL…SYVF. The region spanning 178 to 231 is the HAMP domain; it reads TQITKPLVSLSNKMIEIRRDGFQNKLQLNTNYEEIDNLANTFNEMMSQIEESFN. In terms of domain architecture, Histidine kinase spans 239–451; it reads DASHELRTPL…NKGTTFKIIF (213 aa). Position 242 is a phosphohistidine; by autocatalysis (His-242).

Autophosphorylated.

The protein resides in the cell membrane. The catalysed reaction is ATP + protein L-histidine = ADP + protein N-phospho-L-histidine.. In terms of biological role, member of the two-component regulatory system ArlS/ArlR involved in the regulation of adhesion, autolysis, multidrug resistance and virulence. ArlS probably functions as a sensor protein kinase which is autophosphorylated at a histidine residue and transfers its phosphate group to ArlR. This Staphylococcus aureus (strain USA300) protein is Signal transduction histidine-protein kinase ArlS (arlS).